Here is a 431-residue protein sequence, read N- to C-terminus: Enolase (431 aa).

A (2R)-2-phosphoglycerate-binding site is contributed by glutamine 167. Glutamate 209 functions as the Proton donor in the catalytic mechanism. Aspartate 246, glutamate 290, and aspartate 317 together coordinate Mg(2+). 4 residues coordinate (2R)-2-phosphoglycerate: lysine 342, arginine 371, serine 372, and lysine 393. Lysine 342 serves as the catalytic Proton acceptor.

This sequence belongs to the enolase family. In terms of assembly, component of the RNA degradosome, a multiprotein complex involved in RNA processing and mRNA degradation. The cofactor is Mg(2+).

It is found in the cytoplasm. The protein resides in the secreted. Its subcellular location is the cell surface. It carries out the reaction (2R)-2-phosphoglycerate = phosphoenolpyruvate + H2O. It functions in the pathway carbohydrate degradation; glycolysis; pyruvate from D-glyceraldehyde 3-phosphate: step 4/5. Catalyzes the reversible conversion of 2-phosphoglycerate (2-PG) into phosphoenolpyruvate (PEP). It is essential for the degradation of carbohydrates via glycolysis. The polypeptide is Enolase (Serratia proteamaculans (strain 568)).